The following is a 301-amino-acid chain: Acetylglutamate kinase (301 aa).

Residues 72–73, Arg-94, and Asn-199 contribute to the substrate site; that span reads GG.

Belongs to the acetylglutamate kinase family. ArgB subfamily.

It is found in the cytoplasm. The catalysed reaction is N-acetyl-L-glutamate + ATP = N-acetyl-L-glutamyl 5-phosphate + ADP. Its pathway is amino-acid biosynthesis; L-arginine biosynthesis; N(2)-acetyl-L-ornithine from L-glutamate: step 2/4. Functionally, catalyzes the ATP-dependent phosphorylation of N-acetyl-L-glutamate. This is Acetylglutamate kinase from Bartonella tribocorum (strain CIP 105476 / IBS 506).